Consider the following 211-residue polypeptide: Peptidyl-prolyl cis-trans isomerase FKBP14 (211 aa).

Positions 1 to 19 (MRLFLWNAVLTLFVTSLIG) are cleaved as a signal peptide. C38 and C96 form a disulfide bridge. The 91-residue stretch at 45–135 (GDLMLVHYEG…IFNIDLLEIR (91 aa)) folds into the PPIase FKBP-type domain. Positions 135–170 (RNGPRSHESFQEMDLNDDWKLSKDEVKAYLKKEFEK) constitute an EF-hand 1 domain. 5 residues coordinate Ca(2+): D148, N150, D152, K154, and E159. Residue N176 is glycosylated (N-linked (GlcNAc...) asparagine). An EF-hand 2 domain is found at 179–211 (HHDALVEDIFDKEDEDKDGFISAREFTYKHDEL). 5 residues coordinate Ca(2+): D192, D194, D196, F198, and E203. Residues 208 to 211 (HDEL) carry the Prevents secretion from ER motif.

As to quaternary structure, monomer. Homodimer. Interacts with type III, type IV and type X collagens.

Its subcellular location is the endoplasmic reticulum lumen. It catalyses the reaction [protein]-peptidylproline (omega=180) = [protein]-peptidylproline (omega=0). Its activity is regulated as follows. Inhibited by tacrolimus/FK506. PPIase which accelerates the folding of proteins during protein synthesis. Has a preference for substrates containing 4-hydroxylproline modifications, including type III collagen. May also target type VI and type X collagens. The sequence is that of Peptidyl-prolyl cis-trans isomerase FKBP14 (FKBP14) from Homo sapiens (Human).